A 557-amino-acid polypeptide reads, in one-letter code: MVTEWIQLLIFLFALLIFSPLFGLGLYKVYLYKTSGFEKFLYKICGIDPNRNMDWKEYALSLLVFNFFGFLLLFLILFFQNYLPLNPENFPGLVWDLAFNTAVSFTTNTNWQAYSGESTLSFFSQMAGLTTQNFLSATTGLCVLLALSRGISVNYNVFALGNFWKDMIRGTLYVLLPLSFIFALFLVGFGVVQTFSESVSAITLEGNTQIIPLGPVASQVAIKQLGTNGGGYFGVNASHPFENPSPISNFLQMFSILILPGACVFLYGRITGSIRHAWAIFSVMFTILCVGILIVWTFESSWNPISGTLGFWEGKEIRFGILNSSIWEVATTVASNGSVNSMHDSFSPIGGLVGILNIQLGEIVFGGVGAGMYGMILFVLLTVFLSGIMVGRSPEYLGKKIEKREIQMSILGILLPSTIILLFTAISVSVSDALSSLTNRGPHGLSEILYAFSSGAGNNGSAFAGLNANTTYYNVMIAIAMILGRFGVILPVLVIAGSLAQKKRSEIVSEGSFSTEGGTFYILLLSVIIIVGALTFFPVLTIGPILEHFIMFQNLTF.

The next 10 membrane-spanning stretches (helical) occupy residues 6–26 (IQLLIFLFALLIFSPLFGLGL), 59–79 (ALSLLVFNFFGFLLLFLILFF), 127–147 (AGLTTQNFLSATTGLCVLLAL), 172–192 (LYVLLPLSFIFALFLVGFGVV), 247–267 (ISNFLQMFSILILPGACVFLY), 278–298 (WAIFSVMFTILCVGILIVWTF), 363–383 (IVFGGVGAGMYGMILFVLLTV), 410–430 (ILGILLPSTIILLFTAISVSV), 475–495 (VMIAIAMILGRFGVILPVLVI), and 520–540 (FYILLLSVIIIVGALTFFPVL).

The protein belongs to the KdpA family. The system is composed of three essential subunits: KdpA, KdpB and KdpC.

The protein resides in the cell inner membrane. Its function is as follows. Part of the high-affinity ATP-driven potassium transport (or Kdp) system, which catalyzes the hydrolysis of ATP coupled with the electrogenic transport of potassium into the cytoplasm. This subunit binds the periplasmic potassium ions and delivers the ions to the membrane domain of KdpB through an intramembrane tunnel. The chain is Potassium-transporting ATPase potassium-binding subunit from Leptospira interrogans serogroup Icterohaemorrhagiae serovar copenhageni (strain Fiocruz L1-130).